The sequence spans 432 residues: MDEAVGDLKQALPCVAEAPTVHVEVHQRSCSTAKKEDIKLSVRKLLNRHNIVFGDYKWNEFDDPFLARNVQSVSIVDTELKVKDPQPIDLGACTIALHVFQLNEGGPSSETLEEETENITAASHWVLPAAEFHGLWDSLVYDVEVKSHLLDYVMTTLLFSDKNVDSNLIAWNRVVLLHGPPGTGKTSLCKALAQKLTIRLSSRYQYGQLIEINSHSLFSKWFSESGKLVTKMFQKIQDLIDDKDALVFVLIDEVESLTAARNACRAGTEPSDAIRVVNAVLTQIDQIKRHCNVVILTTSNITERIDVAFVDRADIRQYIGPPSAAAIFKIYLSCLEELMKCQIIYPRQQLLTLRELEMIGFIENNVSKLSLLLSEISRKSEGLSGRVLRKLPFLAHALYIQAPTVTIEGFLQALSLAVDKQFEERKKLSSCI.

An N-acetylmethionine modification is found at M1. 179-186 (GPPGTGKT) is an ATP binding site.

This sequence belongs to the AAA ATPase family. PCH2 subfamily. In terms of assembly, specifically interacts with the ligand binding domain of the thyroid receptor (TR). This interaction does not require the presence of thyroid hormone for its interaction. Interacts with proteasome subunit PSMA8; to participate in meiosis progression during spermatogenesis.

Functionally, plays a key role in chromosome recombination and chromosome structure development during meiosis. Required at early steps in meiotic recombination that leads to non-crossovers pathways. Also needed for efficient completion of homologous synapsis by influencing crossover distribution along the chromosomes affecting both crossovers and non-crossovers pathways. Also required for development of higher-order chromosome structures and is needed for synaptonemal-complex formation. In males, required for efficient synapsis of the sex chromosomes and for sex body formation. Promotes early steps of the DNA double-strand breaks (DSBs) repair process upstream of the assembly of RAD51 complexes. Required for depletion of HORMAD1 and HORMAD2 from synapsed chromosomes. This is Pachytene checkpoint protein 2 homolog (TRIP13) from Canis lupus familiaris (Dog).